The sequence spans 477 residues: Polyketide synthase-related protein Dhc1 (477 aa).

The Carrier domain occupies 34 to 112; that stretch reads EKMTVREGEL…AMTHCVFDRA (79 aa). Position 72 is an O-(pantetheine 4'-phosphoryl)serine (serine 72). The interval 161-322 is ketoreductase (KR) domain; it reads LTGATSFLGS…AGEVFLENLV (162 aa). Positions 410-435 are disordered; it reads VQQQQQQQQRQSQPPRDDAADGSPTE. Over residues 411 to 422 the composition is skewed to low complexity; sequence QQQQQQQQRQSQ. The segment covering 424–435 has biased composition (basic and acidic residues); that stretch reads PRDDAADGSPTE.

It participates in mycotoxin biosynthesis. Functionally, polyketide synthase-related protein; part of the gene cluster that mediates the biosynthesis of 10,11-dehydrocurvularin, a prevalent fungal phytotoxin with heat shock response and immune-modulatory activities. The highly reducing polyketide synthase Dhc3 is responsible for biosynthesis up to the tetraketide stage. The non-reducing polyketide synthase Dhc5 then conducts four additional chain extension cycles, producing the unreduced part of the nascent octaketide from C-1 to C-8 in 10,11-dehydrocurvularin. The role of Dhc1 in 10,11-dehydrocurvularin biosynthesis has not been identified yet. The chain is Polyketide synthase-related protein Dhc1 from Alternaria cinerariae.